The following is a 133-amino-acid chain: p53 and DNA damage-regulated protein 1 (133 aa).

It belongs to the prefoldin subunit beta family. As to quaternary structure, component of the PAQosome complex which is responsible for the biogenesis of several protein complexes and which consists of R2TP complex members RUVBL1, RUVBL2, RPAP3 and PIH1D1, URI complex members PFDN2, PFDN6, PDRG1, UXT and URI1 as well as ASDURF, POLR2E and DNAAF10/WDR92. Predominantly expressed in normal testis and exhibits reduced but detectable expression in other organs.

It localises to the cytoplasm. May play a role in chaperone-mediated protein folding. In Homo sapiens (Human), this protein is p53 and DNA damage-regulated protein 1 (PDRG1).